The chain runs to 384 residues: MMINPLIYLHYNYTGKLDHRPTVGTSPGTRDPKTIAFLVVCSFIILENLTVLLAIWKNHRFHNRMYFFIGNLALCDLLASVAYLVNLLLSGEKTLQLSPVLWFVREGSMFVTLGASIFSLLAIAIERHLTMIKMRPYDASKNYRVFLLIGTCWLVAVLLGALPILGWNCLGNLPDCSTILPLYTKKYVAFCIIVFIVLLLAMSVLYARIYILVKSSSQKVSKHRNSEHAMSLLRTVIIVVGVFIACWMPIFVLLLLDVACERPCPILYKADWFIAVAVLNSAMNPIIYTLASREMRRAFLGLVCGVCYRGNGSGNDSGNKQFQEPSRSRSKSWSSQTHPNQSQQSSRPAELDREQETGHGEISVVAGGAAQASQREGEGGNGGR.

The Extracellular segment spans residues 1 to 34 (MMINPLIYLHYNYTGKLDHRPTVGTSPGTRDPKT). N-linked (GlcNAc...) asparagine glycosylation is present at asparagine 12. A helical transmembrane segment spans residues 35 to 55 (IAFLVVCSFIILENLTVLLAI). Over 56–64 (WKNHRFHNR) the chain is Cytoplasmic. A helical transmembrane segment spans residues 65–85 (MYFFIGNLALCDLLASVAYLV). The Extracellular portion of the chain corresponds to 86–105 (NLLLSGEKTLQLSPVLWFVR). A helical membrane pass occupies residues 106–126 (EGSMFVTLGASIFSLLAIAIE). The Cytoplasmic portion of the chain corresponds to 127 to 144 (RHLTMIKMRPYDASKNYR). A helical transmembrane segment spans residues 145–165 (VFLLIGTCWLVAVLLGALPIL). At 166–186 (GWNCLGNLPDCSTILPLYTKK) the chain is on the extracellular side. The chain crosses the membrane as a helical span at residues 187-207 (YVAFCIIVFIVLLLAMSVLYA). The Cytoplasmic segment spans residues 208-235 (RIYILVKSSSQKVSKHRNSEHAMSLLRT). A helical transmembrane segment spans residues 236 to 256 (VIIVVGVFIACWMPIFVLLLL). At 257–271 (DVACERPCPILYKAD) the chain is on the extracellular side. Residues 272-292 (WFIAVAVLNSAMNPIIYTLAS) form a helical membrane-spanning segment. Residues 293 to 384 (REMRRAFLGL…REGEGGNGGR (92 aa)) are Cytoplasmic-facing. Composition is skewed to polar residues over residues 315–325 (NDSGNKQFQEP) and 336–347 (QTHPNQSQQSSR). Residues 315 to 384 (NDSGNKQFQE…REGEGGNGGR (70 aa)) form a disordered region. Residues 349 to 359 (AELDREQETGH) are compositionally biased toward basic and acidic residues.

The protein belongs to the G-protein coupled receptor 1 family.

The protein localises to the cell membrane. Its function is as follows. Receptor for the lysosphingolipid sphingosine 1-phosphate (S1P). This Takifugu rubripes (Japanese pufferfish) protein is Sphingosine 1-phosphate receptor 3 (s1pr3).